Consider the following 169-residue polypeptide: S-ribosylhomocysteine lyase (169 aa).

Fe cation contacts are provided by His-54, His-58, and Cys-129.

This sequence belongs to the LuxS family. Homodimer. Fe cation serves as cofactor.

The catalysed reaction is S-(5-deoxy-D-ribos-5-yl)-L-homocysteine = (S)-4,5-dihydroxypentane-2,3-dione + L-homocysteine. Its function is as follows. Involved in the synthesis of autoinducer 2 (AI-2) which is secreted by bacteria and is used to communicate both the cell density and the metabolic potential of the environment. The regulation of gene expression in response to changes in cell density is called quorum sensing. Catalyzes the transformation of S-ribosylhomocysteine (RHC) to homocysteine (HC) and 4,5-dihydroxy-2,3-pentadione (DPD). In Haemophilus ducreyi (strain 35000HP / ATCC 700724), this protein is S-ribosylhomocysteine lyase.